The following is a 481-amino-acid chain: Glutamyl-tRNA(Gln) amidotransferase subunit A (481 aa).

Active-site charge relay system residues include K79 and S154. The segment at 136–157 (SAFGATKNPRNPEHVPGGSSGG) is disordered. The active-site Acyl-ester intermediate is S178.

It belongs to the amidase family. GatA subfamily. In terms of assembly, heterotrimer of A, B and C subunits.

The enzyme catalyses L-glutamyl-tRNA(Gln) + L-glutamine + ATP + H2O = L-glutaminyl-tRNA(Gln) + L-glutamate + ADP + phosphate + H(+). In terms of biological role, allows the formation of correctly charged Gln-tRNA(Gln) through the transamidation of misacylated Glu-tRNA(Gln) in organisms which lack glutaminyl-tRNA synthetase. The reaction takes place in the presence of glutamine and ATP through an activated gamma-phospho-Glu-tRNA(Gln). The chain is Glutamyl-tRNA(Gln) amidotransferase subunit A from Lachnospira eligens (strain ATCC 27750 / DSM 3376 / VPI C15-48 / C15-B4) (Eubacterium eligens).